The primary structure comprises 55 residues: ATP synthase F(0) complex subunit 8 (55 aa).

A helical membrane pass occupies residues 8–24 (PWFMIMLMTWFTYSLLI).

This sequence belongs to the ATPase protein 8 family. Component of the ATP synthase complex composed at least of ATP5F1A/subunit alpha, ATP5F1B/subunit beta, ATP5MC1/subunit c (homooctomer), MT-ATP6/subunit a, MT-ATP8/subunit 8, ATP5ME/subunit e, ATP5MF/subunit f, ATP5MG/subunit g, ATP5MK/subunit k, ATP5MJ/subunit j, ATP5F1C/subunit gamma, ATP5F1D/subunit delta, ATP5F1E/subunit epsilon, ATP5PF/subunit F6, ATP5PB/subunit b, ATP5PD/subunit d, ATP5PO/subunit OSCP. ATP synthase complex consists of a soluble F(1) head domain (subunits alpha(3) and beta(3)) - the catalytic core - and a membrane F(0) domain - the membrane proton channel (subunits c, a, 8, e, f, g, k and j). These two domains are linked by a central stalk (subunits gamma, delta, and epsilon) rotating inside the F1 region and a stationary peripheral stalk (subunits F6, b, d, and OSCP).

It is found in the mitochondrion membrane. Subunit 8, of the mitochondrial membrane ATP synthase complex (F(1)F(0) ATP synthase or Complex V) that produces ATP from ADP in the presence of a proton gradient across the membrane which is generated by electron transport complexes of the respiratory chain. ATP synthase complex consist of a soluble F(1) head domain - the catalytic core - and a membrane F(1) domain - the membrane proton channel. These two domains are linked by a central stalk rotating inside the F(1) region and a stationary peripheral stalk. During catalysis, ATP synthesis in the catalytic domain of F(1) is coupled via a rotary mechanism of the central stalk subunits to proton translocation. In vivo, can only synthesize ATP although its ATP hydrolase activity can be activated artificially in vitro. Part of the complex F(0) domain. The polypeptide is ATP synthase F(0) complex subunit 8 (Coturnix japonica (Japanese quail)).